Here is a 273-residue protein sequence, read N- to C-terminus: DnaJ homolog subfamily C member 27 (273 aa).

The interval 1 to 18 is required for interaction with MAPK1; it reads METNVPKRKEPAKSLRIK. GTP contacts are provided by residues 23–30, 71–75, and 134–137; these read GNAEVGKS, DMAGH, and NKID. Positions 217 to 273 constitute a J domain; it reads DSWEMLGVRPGASREEVNKAYRKLAVLLHPDKCVAPGSEDAFKAVVNARTALLKNIK.

The protein belongs to the small GTPase superfamily. Rab family. As to quaternary structure, interacts directly with MAPK1 (wild-type and kinase-deficient forms). Interacts directly (in GTP-bound form) with MAP2K1 (wild-type and kinase-deficient forms).

Its subcellular location is the nucleus. In terms of biological role, GTPase which can activate the MEK/ERK pathway and induce cell transformation when overexpressed. May act as a nuclear scaffold for MAPK1, probably by association with MAPK1 nuclear export signal leading to enhanced ERK1/ERK2 signaling. This is DnaJ homolog subfamily C member 27 (Dnajc27) from Mus musculus (Mouse).